The primary structure comprises 293 residues: FAS1 domain-containing protein DEHA2G15708g (293 aa).

The first 18 residues, 1-18, serve as a signal peptide directing secretion; sequence MKLSSILYVSVLAHLVMS. Residues 76 to 87 show a composition bias toward basic and acidic residues; that stretch reads DHIGENEKREAK. Positions 76–126 are disordered; the sequence is DHIGENEKREAKNVYNLQSLKEGLDDENDKREGNVNKPEVSEEGSNKGDKR. The 150-residue stretch at 141 to 290 folds into the FAS1 domain; it reads QNLLQSILPQ…GYIFVINDVL (150 aa).

The protein resides in the vacuole. The polypeptide is FAS1 domain-containing protein DEHA2G15708g (Debaryomyces hansenii (strain ATCC 36239 / CBS 767 / BCRC 21394 / JCM 1990 / NBRC 0083 / IGC 2968) (Yeast)).